Here is an 839-residue protein sequence, read N- to C-terminus: MVSLRSIFTSSILAAGLTRAHGSSGKTCPTSEVSPACYANQWETTFPPSDIKITGATWVQDNIYDVTLSYEAESLELENLTELKIIGLNSPTGGTKLVWSLNSKVYDIDNPAKWTTTLRVYTKSSADDCYVEMYPFQIQVDWCEAGASTDGCSAWKWPKSYDYDIGCDNMQDGVSRKHHPVYKWPKKCSSDCGVEPTTSDEPEEPTTSEEPVEPTSSDEEPTTSEEPTTSEEPEEPTTSDEPEEPTTSEEPEEPTTSEEPEEPTTSEEPTTSEEPEEPTSSDEEPTTSDEPEEPTTSDEPEEPTTSEEPTTSEEPEEPTTSSEEPTPSEEPEGPTCPTSEVSPACYADQWETTFPPSDIKITGATWVEDNIYDVTLSYEAESLELENLTELKIIGLNSPTGGTKVVWSLNSGIYDIDNPAKWTTTLRVYTKSSADDCYVEMYPFQIQVDWCEAGASTDGCSAWKWPKSYDYDIGCDNMQDGVSRKHHPVYKWPKKCSSNCGVEPTTSDEPEEPTTSEEPEEPTTSEEPEEPTSSDEEPTTSEEPEEPTTSDEPEEPTTSEEPEEPTTSEEPEEPTTSEEPEEPTTSDEEPGTTEEPLVPTTKTETDVSTTLLTVTDCGTKTCTKSLVITGVTKETVTTHGKTTVITTYCPLPTETVTPTPVTVTSTIYADESVTKTTVYTTGAVEKTVTVGGSSTVVVVHTPLTTAVVQSQSTDEIKTVVTARPSTTTIVRDVCYNSVCSVATIVTGVTEKTITFSTGSITVVPTYVPLVESEEHQRTASTSETRATSVVVPTVVGQSSSASATSSIFPSVTIHEGVANTVKNSMISGAVALLFNALFL.

Positions 1–22 (MVSLRSIFTSSILAAGLTRAHG) are cleaved as a signal peptide. Residues 24-194 (SGKTCPTSEV…PKKCSSDCGV (171 aa)) form the Flo11 1 domain. 4 cysteine pairs are disulfide-bonded: Cys28–Cys188, Cys37–Cys167, Cys129–Cys192, and Cys143–Cys152. A glycan (N-linked (GlcNAc...) asparagine) is linked at Asn79. Residues 187 to 342 (KCSSDCGVEP…GPTCPTSEVS (156 aa)) are disordered. Residues 198 to 317 (TSDEPEEPTT…EPTTSEEPEE (120 aa)) are compositionally biased toward acidic residues. The Flo11 2 domain occupies 332 to 502 (EGPTCPTSEV…PKKCSSNCGV (171 aa)). Asn387 carries N-linked (GlcNAc...) asparagine glycosylation. Positions 496-606 (CSSNCGVEPT…LVPTTKTETD (111 aa)) are disordered. Over residues 506 to 592 (TSDEPEEPTT…PTTSDEEPGT (87 aa)) the composition is skewed to acidic residues. The segment covering 593–606 (TEEPLVPTTKTETD) has biased composition (low complexity).

It belongs to the flocculin family. Highly divergent.

Homophilic binding protein that enables kin discrimination in heterogeneous yeast populations by mediating homotypic cell-cell interactions during flocculation, a reversible and asexual process in which cells adhere to form aggregates (flocs). This Komagataella phaffii (strain GS115 / ATCC 20864) (Yeast) protein is Flocculation protein FLO11.